Reading from the N-terminus, the 326-residue chain is tRNA-modifying protein YgfZ (326 aa).

Positions 27 and 189 each coordinate folate.

The protein belongs to the tRNA-modifying YgfZ family.

It localises to the cytoplasm. Its function is as follows. Folate-binding protein involved in regulating the level of ATP-DnaA and in the modification of some tRNAs. It is probably a key factor in regulatory networks that act via tRNA modification, such as initiation of chromosomal replication. This is tRNA-modifying protein YgfZ from Shigella boydii serotype 18 (strain CDC 3083-94 / BS512).